A 487-amino-acid polypeptide reads, in one-letter code: Wax ester synthase/diacylglycerol acyltransferase 3 (487 aa).

Residues 1 to 193 lie on the Cytoplasmic side of the membrane; sequence MYTMKKGKDM…KHASSNKKSW (193 aa). Residue histidine 151 is the Proton acceptor of the active site. A helical membrane pass occupies residues 194–214; it reads WLVGRFWFMIRIIFTTVVELF. The Lumenal segment spans residues 215 to 487; the sequence is KYLLTLCFMR…MEKGVHKMEV (273 aa).

It in the N-terminal section; belongs to the long-chain O-acyltransferase family. In terms of tissue distribution, mostly expressed in flowers and siliques.

The protein resides in the cell membrane. It is found in the endoplasmic reticulum membrane. It carries out the reaction an acyl-CoA + a 1,2-diacyl-sn-glycerol = a triacyl-sn-glycerol + CoA. It catalyses the reaction a long chain fatty alcohol + a fatty acyl-CoA = a wax ester + CoA. It functions in the pathway glycerolipid metabolism; triacylglycerol biosynthesis. It participates in lipid metabolism. In terms of biological role, bifunctional wax ester synthase/diacylglycerol acyltransferase. Involved in cuticular wax biosynthesis. In Arabidopsis thaliana (Mouse-ear cress), this protein is Wax ester synthase/diacylglycerol acyltransferase 3.